A 309-amino-acid polypeptide reads, in one-letter code: CDK-activating kinase assembly factor MAT1 (309 aa).

Met1 is modified (N-acetylmethionine). The segment at 6-50 adopts an RING-type zinc-finger fold; the sequence is CPRCKTTKYRNPSLKLMVNVCGHTLCESCVDLLFVRGAGNCPECG. At Thr51 the chain carries Phosphothreonine. The UIM domain occupies 142–161; the sequence is REQEELEEALEVERQEHEQR. Phosphoserine is present on Ser279.

In terms of assembly, associates primarily with CDK7 and cyclin H to form the CAK complex. CAK can further associate with the core-TFIIH to form the TFIIH basal transcription factor.

It is found in the nucleus. In terms of biological role, stabilizes the cyclin H-CDK7 complex to form a functional CDK-activating kinase (CAK) enzymatic complex. CAK activates the cyclin-associated kinases CDK1, CDK2, CDK4 and CDK6 by threonine phosphorylation. CAK complexed to the core-TFIIH basal transcription factor activates RNA polymerase II by serine phosphorylation of the repetitive C-terminal domain (CTD) of its large subunit (POLR2A), allowing its escape from the promoter and elongation of the transcripts. Involved in cell cycle control and in RNA transcription by RNA polymerase II. In Mus musculus (Mouse), this protein is CDK-activating kinase assembly factor MAT1 (Mnat1).